The primary structure comprises 1399 residues: Meiosis-specific protein ASY2 (1399 aa).

Residues 10–248 form the HORMA domain; it reads QQSLILTTEL…SQHHVLTVKV (239 aa). Positions 257-266 are enriched in acidic residues; that stretch reads PCEDENDNMQ. 5 disordered regions span residues 257–281, 487–525, 617–656, 940–974, and 1045–1090; these read PCED…HDDQ, SKPK…SSEP, RLTG…AAPE, PPPP…VDQV, and DQDK…AAPK. Over residues 267–281 the composition is skewed to basic and acidic residues; that stretch reads DDERSKGPDSLHDDQ. The span at 509-523 shows a compositional bias: pro residues; it reads SAPPSSEPKSAPPSS. The span at 617–631 shows a compositional bias: polar residues; it reads RLTGNPSNEAQSSRS. Positions 1205-1246 form a coiled coil; the sequence is MASLRDAAEIHKAEMSSLNDEVKRLNSREADLQKEFSDLQVA.

The protein localises to the chromosome. Its subcellular location is the nucleus. Required for normal meiosis. The sequence is that of Meiosis-specific protein ASY2 from Arabidopsis thaliana (Mouse-ear cress).